The chain runs to 260 residues: Small ribosomal subunit protein uS2 (260 aa).

The interval 225–260 (KGQTQTEAAPNAQAAPEAAAPAEQPAEEAAAASSEG) is disordered. The span at 231 to 260 (EAAPNAQAAPEAAAPAEQPAEEAAAASSEG) shows a compositional bias: low complexity.

It belongs to the universal ribosomal protein uS2 family.

In Rhodopirellula baltica (strain DSM 10527 / NCIMB 13988 / SH1), this protein is Small ribosomal subunit protein uS2.